We begin with the raw amino-acid sequence, 84 residues long: Cell division topological specificity factor (84 aa).

Belongs to the MinE family.

Its function is as follows. Prevents the cell division inhibition by proteins MinC and MinD at internal division sites while permitting inhibition at polar sites. This ensures cell division at the proper site by restricting the formation of a division septum at the midpoint of the long axis of the cell. This chain is Cell division topological specificity factor, found in Cupriavidus pinatubonensis (strain JMP 134 / LMG 1197) (Cupriavidus necator (strain JMP 134)).